The primary structure comprises 466 residues: A-type ATP synthase subunit B 2 (466 aa).

Belongs to the ATPase alpha/beta chains family. Has multiple subunits with at least A(3), B(3), C, D, E, F, H, I and proteolipid K(x).

Its subcellular location is the cell membrane. Component of the A-type ATP synthase that produces ATP from ADP in the presence of a proton gradient across the membrane. The B chain is a regulatory subunit. In Methanospirillum hungatei JF-1 (strain ATCC 27890 / DSM 864 / NBRC 100397 / JF-1), this protein is A-type ATP synthase subunit B 2.